A 257-amino-acid polypeptide reads, in one-letter code: NAD-capped RNA hydrolase NudC (257 aa).

K25 and R69 together coordinate substrate. C98 and C101 together coordinate Zn(2+). E111 is a substrate binding site. Zn(2+)-binding residues include C116 and C119. Substrate is bound at residue Y124. In terms of domain architecture, Nudix hydrolase spans 125 to 248 (PQIAPCIIVA…TVARRLIEDT (124 aa)). A158, E174, and E178 together coordinate a divalent metal cation. The Nudix box signature appears at 159-180 (GFVEVGETLEQAVAREVMEESG). 192 to 199 (QPWPFPQS) serves as a coordination point for substrate. E219 serves as a coordination point for a divalent metal cation. A241 contacts substrate.

It belongs to the Nudix hydrolase family. NudC subfamily. In terms of assembly, homodimer. Mg(2+) serves as cofactor. It depends on Mn(2+) as a cofactor. Requires Zn(2+) as cofactor.

It catalyses the reaction a 5'-end NAD(+)-phospho-ribonucleoside in mRNA + H2O = a 5'-end phospho-adenosine-phospho-ribonucleoside in mRNA + beta-nicotinamide D-ribonucleotide + 2 H(+). The enzyme catalyses NAD(+) + H2O = beta-nicotinamide D-ribonucleotide + AMP + 2 H(+). It carries out the reaction NADH + H2O = reduced beta-nicotinamide D-ribonucleotide + AMP + 2 H(+). In terms of biological role, mRNA decapping enzyme that specifically removes the nicotinamide adenine dinucleotide (NAD) cap from a subset of mRNAs by hydrolyzing the diphosphate linkage to produce nicotinamide mononucleotide (NMN) and 5' monophosphate mRNA. The NAD-cap is present at the 5'-end of some mRNAs and stabilizes RNA against 5'-processing. Has preference for mRNAs with a 5'-end purine. Catalyzes the hydrolysis of a broad range of dinucleotide pyrophosphates. This is NAD-capped RNA hydrolase NudC from Shigella dysenteriae serotype 1 (strain Sd197).